The sequence spans 106 residues: Small ribosomal subunit protein uS10 (106 aa).

Belongs to the universal ribosomal protein uS10 family. Part of the 30S ribosomal subunit.

Its function is as follows. Involved in the binding of tRNA to the ribosomes. This chain is Small ribosomal subunit protein uS10, found in Prochlorococcus marinus (strain MIT 9312).